The primary structure comprises 91 residues: RNA-binding protein Hfq (91 aa).

The Sm domain maps to 9–68 (DPYLNALRRERIPVSIYLVNGIKLQGQIESFDQFVILLKNTVNQMVYKHAISTVVPARSV). Residues 69–91 (SHHNNNHHTAPTEAVENVETQAE) are disordered.

This sequence belongs to the Hfq family. Homohexamer.

Its function is as follows. RNA chaperone that binds small regulatory RNA (sRNAs) and mRNAs to facilitate mRNA translational regulation in response to envelope stress, environmental stress and changes in metabolite concentrations. Also binds with high specificity to tRNAs. The protein is RNA-binding protein Hfq of Haemophilus influenzae (strain ATCC 51907 / DSM 11121 / KW20 / Rd).